The chain runs to 864 residues: Carbohydrate-responsive element-binding protein (864 aa).

Disordered stretches follow at residues 15 to 41 and 53 to 77; these read PRVV…AGGL and MVSS…LADF. A phosphoserine mark is found at Ser-20, Ser-23, and Ser-25. Thr-27 carries the post-translational modification Phosphothreonine. The residue at position 196 (Ser-196) is a Phosphoserine. Disordered regions lie at residues 332–397, 449–468, 489–533, 547–570, and 583–602; these read SSGI…APGP, PGVS…QPGP, PHFT…TARD, PEQA…PQDT, and PIPA…LAPP. Residues 351–368 show a composition bias toward polar residues; that stretch reads GMTPHSGNTRLQARNSCS. A compositionally biased stretch (low complexity) spans 513-531; the sequence is ASPPTLASATASPTATATA. The residue at position 566 (Ser-566) is a Phosphoserine; by AMPK. The span at 583–596 shows a compositional bias: pro residues; the sequence is PIPAPTPPRPPPGP. Ser-614, Ser-626, and Ser-643 each carry phosphoserine. The 55-residue stretch at 661-715 folds into the bHLH domain; the sequence is NRRITHISAEQKRRFNIKLGFDTLHGLVSTLSAQPSLKVSKATTLQKTAEYILML. Residues 715-736 form a leucine-zipper region; that stretch reads LQQERAAMQEEAQQLRDEIEEL.

Binds DNA as a heterodimer with TCFL4/MLX. Phosphorylation at Ser-566 by AMPK inactivates the DNA-binding activity. In terms of tissue distribution, expressed in the ventricular and intermediate zones of the developing spinal cord of 12.5 dpc embryos. In later embryos expressed in a variety of tissues.

The protein localises to the nucleus. Functionally, transcriptional repressor. Binds to the canonical and non-canonical E box sequences 5'-CACGTG-3'. The sequence is that of Carbohydrate-responsive element-binding protein (Mlxipl) from Mus musculus (Mouse).